The sequence spans 44 residues: Putative protein PsbN (44 aa).

The helical transmembrane segment at Ile3 to Ser23 threads the bilayer.

It belongs to the PsbN family.

The protein resides in the plastid. It localises to the chloroplast thylakoid membrane. Functionally, may play a role in photosystem I and II biogenesis. This chain is Putative protein PsbN, found in Euglena gracilis.